The primary structure comprises 587 residues: ATP-dependent lipid A-core flippase (587 aa).

5 helical membrane passes run 31–51 (LIVSGVALVFNALADSGLIYL), 68–88 (LKMMAFVVVGMIILRGITNFI), 145–165 (GSLITIVREGAYIISLFAVMF), 166–186 (YTSWELTIVLFIIGPIIAVLI), and 259–279 (VQVIASLALATVLYLATTPLI). Positions 32-315 (IVSGVALVFN…LTAVNAQFQS (284 aa)) constitute an ABC transmembrane type-1 domain. An ABC transporter domain is found at 347–583 (LEFKNVSFAY…NGAYKQLHSM (237 aa)). 381–388 (GRSGSGKS) contributes to the ATP binding site.

Belongs to the ABC transporter superfamily. Lipid exporter (TC 3.A.1.106) family. Homodimer.

The protein localises to the cell inner membrane. It carries out the reaction ATP + H2O + lipid A-core oligosaccharideSide 1 = ADP + phosphate + lipid A-core oligosaccharideSide 2.. Involved in lipopolysaccharide (LPS) biosynthesis. Translocates lipid A-core from the inner to the outer leaflet of the inner membrane. Transmembrane domains (TMD) form a pore in the inner membrane and the ATP-binding domain (NBD) is responsible for energy generation. The protein is ATP-dependent lipid A-core flippase of Haemophilus influenzae (strain ATCC 51907 / DSM 11121 / KW20 / Rd).